The sequence spans 400 residues: Acetate kinase (400 aa).

Residue Asn7 coordinates Mg(2+). Lys14 serves as a coordination point for ATP. Arg85 lines the substrate pocket. Asp142 serves as the catalytic Proton donor/acceptor. ATP-binding positions include 202-206 (HLGNG), 278-280 (DMR), and 326-330 (GIGEN). Glu380 is a binding site for Mg(2+).

Belongs to the acetokinase family. Homodimer. It depends on Mg(2+) as a cofactor. Requires Mn(2+) as cofactor.

Its subcellular location is the cytoplasm. The catalysed reaction is acetate + ATP = acetyl phosphate + ADP. It functions in the pathway metabolic intermediate biosynthesis; acetyl-CoA biosynthesis; acetyl-CoA from acetate: step 1/2. Its function is as follows. Catalyzes the formation of acetyl phosphate from acetate and ATP. Can also catalyze the reverse reaction. This chain is Acetate kinase, found in Deinococcus deserti (strain DSM 17065 / CIP 109153 / LMG 22923 / VCD115).